Here is a 439-residue protein sequence, read N- to C-terminus: High-energy light unresponsive protein 1 (439 aa).

Residues 1 to 67 (MPPPSSHSNI…LGLNQSIRPN (67 aa)) lie on the Cytoplasmic side of the membrane. A helical membrane pass occupies residues 68-88 (NSLLFRIYSWLVFCLLLFTTL). Residues 89 to 114 (RKFNQVGVRPNGTRENLQEFFANPRS) lie on the Extracellular side of the membrane. The helical transmembrane segment at 115–135 (MITLCNALIMLSGLLASLQLY) threads the bilayer. Residues 136–164 (TLGAKRLKPLKILCQFSLNVRTKQAERRQ) lie on the Cytoplasmic side of the membrane. Residues 165-185 (FMINTFLAVFSGLLALTMAAT) traverse the membrane as a helical segment. The Extracellular segment spans residues 186–211 (YAMSKWGYILYIVGTPNLDTETIFCV). A helical transmembrane segment spans residues 212–232 (LLDSYALFVSRAAISALAILF). Residues 233 to 290 (YQHCSVIRRSIKHLINEMVPAEQDECPLPESSLQKIHDCQISYQRIFNGKAVIEEYYS) are Cytoplasmic-facing. Residues 291 to 311 (FVLFYSYGVCIPIFCFLMFVG) form a helical membrane-spanning segment. Residues 312-324 (MSAQSICWSEVVS) lie on the Extracellular side of the membrane. Residues 325–345 (IVIWIVNAILVLLLFSLPAFM) form a helical membrane-spanning segment. Over 346 to 402 (INEDGDRLVASSFRMYHETFHEERDLTVLSQMTFFTFQIHSTKLTLSACNYFYMDRS) the chain is Cytoplasmic. Residues 403 to 423 (ILLSLFSAILTYFLILWEFDI) form a helical membrane-spanning segment. Residues 424–439 (KNNQSLQNIANHTIHT) are Extracellular-facing.

The protein belongs to the insect chemoreceptor superfamily. Gustatory receptor (GR) family. In terms of tissue distribution, expressed in the AVG and PVT neurons of the tail.

The protein resides in the cell membrane. In terms of biological role, photoreceptor for short wavelength (UV) light that mediates UV-light-induced avoidance behavior. Directly senses and absorbs both UV-A and UV-B light with very high efficiency. Absorption of UV-B but not UV-A light shows resistance to photobleaching. In contrast to other photoreceptors, does not use a prosthetic chromophore to capture photons and only depends on its protein conformation. Might have a role in response to white light exposure. This is High-energy light unresponsive protein 1 from Caenorhabditis elegans.